A 413-amino-acid polypeptide reads, in one-letter code: Palmitoyltransferase ZDHHC6 (413 aa).

At 1–24 (MGTFCSVVKFENLQELKRLCHWGP) the chain is on the cytoplasmic side. A helical membrane pass occupies residues 25–45 (IIALGVIAICSAMAMIDSVLW). Residues 46-57 (YWPLHTTGGSVN) lie on the Lumenal side of the membrane. A helical membrane pass occupies residues 58 to 78 (FIMLINWTVMILYNYFNAMFV). Over 79 to 143 (GPGFVPLGWK…NCCGYQNHAS (65 aa)) the chain is Cytoplasmic. Residues 99–149 (QYCKVCQAYKAPRSHHCRKCNRCVMKMDHHCPWINNCCGYQNHASFTLFLL) enclose the DHHC domain. C129 acts as the S-palmitoyl cysteine intermediate in catalysis. The helical transmembrane segment at 144 to 164 (FTLFLLLAPLGCIHAAFIFVM) threads the bilayer. Over 165–194 (TMYTQLYNRLSFGWNTVKIDMSAARRDPLP) the chain is Lumenal. A helical membrane pass occupies residues 195–215 (IIPFGLAAFAATLFALGLALG). Topologically, residues 216–413 (TTIAVGMLFF…QAPEGEKKNR (198 aa)) are cytoplasmic. The region spanning 313-398 (VRSVRYKVIE…PRNCVEKCPC (86 aa)) is the SH3 domain. 3 S-palmitoyl cysteine lipidation sites follow: C328, C329, and C343. A Di-lysine motif motif is present at residues 410-413 (KKNR).

The protein belongs to the DHHC palmitoyltransferase family. As to quaternary structure, homooligomerizes. Interacts with SELENOK. In terms of processing, palmitoylated at 3 different sites by ZDHHC16. The combination of the different palmitoylation events strongly affects the quaternary assembly of ZDHHC6, its localization, stability and function. Palmitoylation at Cys-328 accelerates the turnover of ZDHHC6. Depalmitoylated by LYPLA2.

It is found in the endoplasmic reticulum membrane. The catalysed reaction is L-cysteinyl-[protein] + hexadecanoyl-CoA = S-hexadecanoyl-L-cysteinyl-[protein] + CoA. It carries out the reaction L-cysteinyl-[protein] + octadecanoyl-CoA = S-octadecanoyl-L-cysteinyl-[protein] + CoA. Functionally, endoplasmic reticulum palmitoyl acyltransferase that mediates palmitoylation of proteins such as AMFR, CALX, ITPR1 and TFRC. Palmitoylates calnexin (CALX), which is required for its association with the ribosome-translocon complex and efficient folding of glycosylated proteins. Mediates palmitoylation of AMFR, promoting AMFR distribution to the peripheral endoplasmic reticulum. Together with SELENOK, palmitoylates ITPR1 in immune cells, leading to regulate ITPR1 stability and function. Stearoyltransferase that mediates stearoylation of TFRC to inhibit TFRC-mediated activation of the JNK pathway and mitochondrial fragmentation. The chain is Palmitoyltransferase ZDHHC6 from Bos taurus (Bovine).